The sequence spans 354 residues: S-adenosylmethionine:tRNA ribosyltransferase-isomerase (354 aa).

It belongs to the QueA family. As to quaternary structure, monomer.

The protein resides in the cytoplasm. It catalyses the reaction 7-aminomethyl-7-carbaguanosine(34) in tRNA + S-adenosyl-L-methionine = epoxyqueuosine(34) in tRNA + adenine + L-methionine + 2 H(+). It participates in tRNA modification; tRNA-queuosine biosynthesis. In terms of biological role, transfers and isomerizes the ribose moiety from AdoMet to the 7-aminomethyl group of 7-deazaguanine (preQ1-tRNA) to give epoxyqueuosine (oQ-tRNA). The chain is S-adenosylmethionine:tRNA ribosyltransferase-isomerase from Thermosynechococcus vestitus (strain NIES-2133 / IAM M-273 / BP-1).